The chain runs to 561 residues: DNA ligase B (561 aa).

The N6-AMP-lysine intermediate role is filled by Lys-128.

Belongs to the NAD-dependent DNA ligase family. LigB subfamily.

It catalyses the reaction NAD(+) + (deoxyribonucleotide)n-3'-hydroxyl + 5'-phospho-(deoxyribonucleotide)m = (deoxyribonucleotide)n+m + AMP + beta-nicotinamide D-nucleotide.. Functionally, catalyzes the formation of phosphodiester linkages between 5'-phosphoryl and 3'-hydroxyl groups in double-stranded DNA using NAD as a coenzyme and as the energy source for the reaction. This is DNA ligase B from Pseudomonas syringae pv. syringae (strain B728a).